A 95-amino-acid chain; its full sequence is Parvalbumin alpha (95 aa).

Residue Ser-19 is modified to Phosphoserine. EF-hand domains lie at 34 to 69 (KNREEVKMVFQILDKDKSGFIEEEELKFILKGFSAD) and 73 to 95 (LSDTETKRMMAAGDKDGDGKIGA). Residues Asp-47, Asp-49, Ser-51, Phe-53, Glu-55, Glu-58, Asp-86, Asp-88, Asp-90, and Lys-92 each coordinate Ca(2+).

This sequence belongs to the parvalbumin family.

Its function is as follows. In muscle, parvalbumin is thought to be involved in relaxation after contraction. It binds two calcium ions. The chain is Parvalbumin alpha (PVALB) from Cavia porcellus (Guinea pig).